Consider the following 206-residue polypeptide: GTP cyclohydrolase 1 (206 aa).

Residues Cys98, His101, and Cys169 each coordinate Zn(2+).

The protein belongs to the GTP cyclohydrolase I family. In terms of assembly, toroid-shaped homodecamer, composed of two pentamers of five dimers.

The catalysed reaction is GTP + H2O = 7,8-dihydroneopterin 3'-triphosphate + formate + H(+). Its pathway is cofactor biosynthesis; 7,8-dihydroneopterin triphosphate biosynthesis; 7,8-dihydroneopterin triphosphate from GTP: step 1/1. This Helicobacter hepaticus (strain ATCC 51449 / 3B1) protein is GTP cyclohydrolase 1.